A 232-amino-acid polypeptide reads, in one-letter code: U2 small nuclear ribonucleoprotein B'' (232 aa).

The region spanning 10–89 is the RRM 1 domain; the sequence is QTVYLRNLNE…KRMRVQYAKT (80 aa). A disordered region spans residues 90–159; the sequence is RSDCLATEDG…QEPPAPPNNI (70 aa). Residues 108–123 are compositionally biased toward basic and acidic residues; the sequence is KKQEEKAAEKKRRAEE. Positions 127–151 are enriched in polar residues; the sequence is SGPNAAAQSNGTGYQASRLGKTSQE. In terms of domain architecture, RRM 2 spans 158–232; sequence NILFIQNLPA…NPMAISYAKK (75 aa).

It belongs to the RRM U1 A/B'' family. As to quaternary structure, component of the spliceosome where it is associated with snRNP U2.

The protein resides in the nucleus. Its subcellular location is the cajal body. It is found in the nucleoplasm. It localises to the cytoplasm. Its function is as follows. Involved in nuclear pre-mRNA splicing. The protein is U2 small nuclear ribonucleoprotein B'' of Oryza sativa subsp. japonica (Rice).